The chain runs to 282 residues: Pantothenate synthetase (282 aa).

29 to 36 (MGFLHEGH) is a binding site for ATP. His-36 (proton donor) is an active-site residue. (R)-pantoate is bound at residue Gln-60. Beta-alanine is bound at residue Gln-60. Position 146–149 (146–149 (GEKD)) interacts with ATP. Gln-152 serves as a coordination point for (R)-pantoate. ATP is bound by residues Ile-175 and 183 to 186 (KSSR).

It belongs to the pantothenate synthetase family. As to quaternary structure, homodimer.

It localises to the cytoplasm. The enzyme catalyses (R)-pantoate + beta-alanine + ATP = (R)-pantothenate + AMP + diphosphate + H(+). Its pathway is cofactor biosynthesis; (R)-pantothenate biosynthesis; (R)-pantothenate from (R)-pantoate and beta-alanine: step 1/1. Functionally, catalyzes the condensation of pantoate with beta-alanine in an ATP-dependent reaction via a pantoyl-adenylate intermediate. The chain is Pantothenate synthetase from Clostridioides difficile (strain 630) (Peptoclostridium difficile).